The following is a 407-amino-acid chain: Indoleamine 2,3-dioxygenase 1 (407 aa).

H350 serves as a coordination point for heme b. A disordered region spans residues 362 to 388 (SKQKPMGGHKSEEPSNTENRGTGGTDV).

This sequence belongs to the indoleamine 2,3-dioxygenase family. As to quaternary structure, monomer. The cofactor is heme b.

Its subcellular location is the cytoplasm. The protein localises to the cytosol. The catalysed reaction is D-tryptophan + O2 = N-formyl-D-kynurenine. The enzyme catalyses L-tryptophan + O2 = N-formyl-L-kynurenine. Its activity is regulated as follows. Activity is inhibited by and MTH-trp (methylthiohydantoin-DL-tryptophan), modestly inhibited by L-1MT (1-methyl-L-tryptophan) but not D-1MT (1-methyl-D-tryptophan). In terms of biological role, catalyzes the first and rate limiting step of the catabolism of the essential amino acid tryptophan along the kynurenine pathway. Involved in the peripheral immune tolerance, contributing to maintain homeostasis by preventing autoimmunity or immunopathology that would result from uncontrolled and overreacting immune responses. Tryptophan shortage inhibits T lymphocytes division and accumulation of tryptophan catabolites induces T-cell apoptosis and differentiation of regulatory T-cells. Acts as a suppressor of anti-tumor immunity. Limits the growth of intracellular pathogens by depriving tryptophan. Protects the fetus from maternal immune rejection. In Rattus norvegicus (Rat), this protein is Indoleamine 2,3-dioxygenase 1.